The primary structure comprises 185 residues: Lysozyme g (185 aa).

The residue at position 1 (Gln1) is a Pyrrolidone carboxylic acid. 2 disulfide bridges follow: Cys4/Cys60 and Cys18/Cys29. Active-site residues include Glu73 and Asp86.

Belongs to the glycosyl hydrolase 23 family.

It localises to the secreted. The catalysed reaction is Hydrolysis of (1-&gt;4)-beta-linkages between N-acetylmuramic acid and N-acetyl-D-glucosamine residues in a peptidoglycan and between N-acetyl-D-glucosamine residues in chitodextrins.. The polypeptide is Lysozyme g (Casuarius casuarius (Southern cassowary)).